A 302-amino-acid polypeptide reads, in one-letter code: Phospho-N-acetylmuramoyl-pentapeptide-transferase (302 aa).

9 consecutive transmembrane segments (helical) span residues 1–21, 42–62, 68–88, 123–143, 154–174, 178–198, 204–224, 229–249, and 279–299; these read MIAA…KLFR, GTPT…GMIS, VLLG…LSVV, FFGF…LVIV, GLDG…WFFL, GVSE…LVFN, IFMG…VSVL, FYLV…ILQV, and IVAV…EIFG.

Belongs to the glycosyltransferase 4 family. MraY subfamily. Requires Mg(2+) as cofactor.

It is found in the cell inner membrane. The enzyme catalyses UDP-N-acetyl-alpha-D-muramoyl-L-alanyl-gamma-D-glutamyl-meso-2,6-diaminopimeloyl-D-alanyl-D-alanine + di-trans,octa-cis-undecaprenyl phosphate = di-trans,octa-cis-undecaprenyl diphospho-N-acetyl-alpha-D-muramoyl-L-alanyl-D-glutamyl-meso-2,6-diaminopimeloyl-D-alanyl-D-alanine + UMP. The protein operates within cell wall biogenesis; peptidoglycan biosynthesis. Catalyzes the initial step of the lipid cycle reactions in the biosynthesis of the cell wall peptidoglycan: transfers peptidoglycan precursor phospho-MurNAc-pentapeptide from UDP-MurNAc-pentapeptide onto the lipid carrier undecaprenyl phosphate, yielding undecaprenyl-pyrophosphoryl-MurNAc-pentapeptide, known as lipid I. The polypeptide is Phospho-N-acetylmuramoyl-pentapeptide-transferase (Thermotoga petrophila (strain ATCC BAA-488 / DSM 13995 / JCM 10881 / RKU-1)).